Here is an 83-residue protein sequence, read N- to C-terminus: uncharacterized protein (83 aa).

A disordered region spans residues 15–36; sequence RLKNGRGNKTMSESDYNTSDSG. A compositionally biased stretch (polar residues) spans 21 to 35; that stretch reads GNKTMSESDYNTSDS.

This is an uncharacterized protein from Aedes vexans (Inland floodwater mosquito).